A 446-amino-acid polypeptide reads, in one-letter code: tRNA modification GTPase MnmE (446 aa).

3 residues coordinate (6S)-5-formyl-5,6,7,8-tetrahydrofolate: R23, E81, and K120. The TrmE-type G domain maps to 216–370 (GFKVAIIGKP…LIKELELILD (155 aa)). N226 contributes to the K(+) binding site. GTP is bound by residues 226-231 (NVGKSS), 245-251 (SDIAGTT), and 270-273 (DTAG). Mg(2+) is bound at residue S230. Residues S245, I247, and T250 each contribute to the K(+) site. T251 provides a ligand contact to Mg(2+). K446 is a binding site for (6S)-5-formyl-5,6,7,8-tetrahydrofolate.

The protein belongs to the TRAFAC class TrmE-Era-EngA-EngB-Septin-like GTPase superfamily. TrmE GTPase family. Homodimer. Heterotetramer of two MnmE and two MnmG subunits. It depends on K(+) as a cofactor.

The protein resides in the cytoplasm. In terms of biological role, exhibits a very high intrinsic GTPase hydrolysis rate. Involved in the addition of a carboxymethylaminomethyl (cmnm) group at the wobble position (U34) of certain tRNAs, forming tRNA-cmnm(5)s(2)U34. In Aliarcobacter butzleri (strain RM4018) (Arcobacter butzleri), this protein is tRNA modification GTPase MnmE.